The sequence spans 393 residues: METFLFTSESVNEGHPDKLCDQISDAVLDACLEQDPDSKVACETCTKTNMVMVFGEITTKGNIDYEKIVRDTCRNIGFVSDDVGLDADNCKVLVNIEQQSPDIAQGVHGHLTKRPEEIGAGDQGHMFGYATDETPELMPLSHVLATKLGARLTEVRKDGTCPWLRPDGKTQVTIEYYNENGAMVPIRVHTVLISTQHDETVTNDKIAADLKEHVIRPVIPEKYLDEKTIFHLNPSGRFVIGGPHGDAGLTGRKIIIDTYGGWGAHGGGAFSGKDPTKVDRSGAYIVRQAAKSIVASGLARRCIVQVSYAIGVPEPLSVFVDTYGTGKIPDKEILKIVKESFDFRPGMIAIHLDLKRGGNGRFLKTAAYGHFGRDDADFTWEVVKPLKWEKPQD.

Residue Glu43 coordinates K(+). The L-methionine site is built by Glu56 and Gln99. ATP-binding positions include Asp167–Lys169, Ser235–Phe238, Asp246, Arg252–Lys253, Ala269, Lys273, and Lys277. Asp246 provides a ligand contact to L-methionine. Residue Lys277 coordinates L-methionine.

It belongs to the AdoMet synthase family. Homotetramer. Mn(2+) is required as a cofactor. Requires Mg(2+) as cofactor. Co(2+) serves as cofactor. The cofactor is K(+).

The protein localises to the cytoplasm. The catalysed reaction is L-methionine + ATP + H2O = S-adenosyl-L-methionine + phosphate + diphosphate. It participates in amino-acid biosynthesis; S-adenosyl-L-methionine biosynthesis; S-adenosyl-L-methionine from L-methionine: step 1/1. In terms of biological role, catalyzes the formation of S-adenosylmethionine from methionine and ATP. The reaction comprises two steps that are both catalyzed by the same enzyme: formation of S-adenosylmethionine (AdoMet) and triphosphate, and subsequent hydrolysis of the triphosphate. This Actinidia chinensis var. chinensis (Chinese soft-hair kiwi) protein is S-adenosylmethionine synthase 3 (SAM3).